Reading from the N-terminus, the 376-residue chain is Carbohydrate sulfotransferase 14 (376 aa).

Residues 1–39 lie on the Cytoplasmic side of the membrane; the sequence is MFPRPLTPLAAPNGAEPLGRALRRAPLGRARAGLGGPPL. The chain crosses the membrane as a helical; Signal-anchor for type II membrane protein span at residues 40-60; the sequence is LLPSMLMFAVIVASSGLLLMI. Residues 61–376 lie on the Lumenal side of the membrane; it reads ERGILAEMKP…PNVTKEACQQ (316 aa). Asn-110 carries an N-linked (GlcNAc...) asparagine glycan. 3'-phosphoadenylyl sulfate is bound by residues 155–161 and 213–221; these read PKVACSN and REPLERLLS. Residue Asn-368 is glycosylated (N-linked (GlcNAc...) asparagine).

It belongs to the sulfotransferase 2 family. As to expression, widely expressed. Expressed at high level in pituitary gland, placenta, uterus and thyroid.

The protein resides in the golgi apparatus membrane. The catalysed reaction is dermatan + n 3'-phosphoadenylyl sulfate = dermatan 4'-sulfate + n adenosine 3',5'-bisphosphate + n H(+). Catalyzes the transfer of sulfate to position 4 of the N-acetylgalactosamine (GalNAc) residue of dermatan sulfate. Plays a pivotal role in the formation of 4-0-sulfated IdoA blocks in dermatan sulfate. Transfers sulfate to the C-4 hydroxyl of beta1,4-linked GalNAc that is substituted with an alpha-linked iduronic acid (IdoUA) at the C-3 hydroxyl. Transfers sulfate more efficiently to GalNAc residues in -IdoUA-GalNAc-IdoUA- than in -GlcUA-GalNAc-GlcUA-sequences. Has preference for partially desulfated dermatan sulfate. Addition of sulfate to GalNAc may occur immediately after epimerization of GlcUA to IdoUA. Appears to have an important role in the formation of the cerebellar neural network during postnatal brain development. This is Carbohydrate sulfotransferase 14 (CHST14) from Homo sapiens (Human).